A 405-amino-acid polypeptide reads, in one-letter code: Glucoside xylosyltransferase 1 (405 aa).

Residues 1–2 are Cytoplasmic-facing; the sequence is MR. The helical; Signal-anchor for type II membrane protein transmembrane segment at 3–23 threads the bilayer; the sequence is IYLRTFGLCIVVALLSLVFLF. Topologically, residues 24–405 are lumenal; the sequence is SKHDEGSFSA…RLQRATPPGD (382 aa). Residues 46–65 are disordered; it reads SFNGAKAKQRPTATTSHRDV. N-linked (GlcNAc...) asparagine glycosylation is found at Asn202, Asn243, Asn277, and Asn372.

It belongs to the glycosyltransferase 8 family.

It is found in the membrane. The catalysed reaction is 3-O-(beta-D-glucosyl)-L-seryl-[EGF-like domain protein] + UDP-alpha-D-xylose = 3-O-[alpha-D-xylosyl-(1-&gt;3)-beta-D-glucosyl]-L-seryl-[EGF-like domain protein] + UDP + H(+). Glycosyltransferase which elongates the O-linked glucose attached to EGF-like repeats in the extracellular domain of Notch proteins by catalyzing the addition of xylose. This is Glucoside xylosyltransferase 1 (gxylt1) from Danio rerio (Zebrafish).